A 327-amino-acid chain; its full sequence is Annexin A8 (327 aa).

Annexin repeat units follow at residues 21 to 92, 93 to 164, 177 to 249, and 253 to 324; these read FNPD…ALMY, PPYR…CLLQ, GLAL…TVVK, and NVHS…NLVG. 4 residues coordinate Ca(2+): methionine 266, glycine 268, glycine 270, and aspartate 310.

The protein belongs to the annexin family.

This protein is an anticoagulant protein that acts as an indirect inhibitor of the thromboplastin-specific complex, which is involved in the blood coagulation cascade. In Rattus norvegicus (Rat), this protein is Annexin A8 (Anxa8).